A 917-amino-acid polypeptide reads, in one-letter code: Major intrinsically disordered Notch2-binding receptor 1 (917 aa).

Residues 1-892 (MEANQEASLF…AEFRRAKVCK (892 aa)) lie on the Cytoplasmic side of the membrane. 7 disordered regions span residues 337–367 (STYF…WPAK), 388–410 (PSEE…GPDR), 461–483 (SCTS…QHVL), 568–588 (ITNG…NVHH), 652–687 (SEAP…CSDA), 706–727 (TRPS…IASI), and 746–783 (NEEE…LPKQ). Residues 461–480 (SCTSGQHSSDTSSVGTQTEQ) are compositionally biased toward polar residues. A compositionally biased stretch (basic and acidic residues) spans 576–588 (KGDKCNRPENVHH). S712 carries the phosphoserine modification. A helical transmembrane segment spans residues 893–913 (IAALITAAACTVILVIVVPIC). Over 914–917 (TMKS) the chain is Extracellular.

Belongs to the MINAR family. As to quaternary structure, interacts with NOTCH2; this interaction increases MINAR1 stability. Interacts (via N-terminus) with DEPTOR (via PDZ domain); this interaction may stabilize DEPTOR protein by impairing its ubiquitination. Expressed in brain and in islets of Langerhans.

Its subcellular location is the cell membrane. Intrinsically disordered protein which may negatively regulate mTOR signaling pathway by stabilizing the mTOR complex component DEPTOR. Negatively regulates angiogenesis. Negatively regulates cell growth. Negatively regulates neurite outgrowth in hippocampal neurons. The protein is Major intrinsically disordered Notch2-binding receptor 1 (Minar1) of Mus musculus (Mouse).